A 549-amino-acid polypeptide reads, in one-letter code: Cation/acetate symporter ActP (549 aa).

13 helical membrane-spanning segments follow: residues 33–53, 77–97, 103–123, 148–168, 183–203, 206–226, 262–282, 303–323, 355–375, 404–424, 428–448, 464–484, and 493–513; these read WQAI…TYWA, LAIA…ALVF, GLIY…LIAE, ILSA…QMVG, IAVV…GMLA, WVQI…AFMV, ISAL…PHIL, GFMG…IMLV, LFLG…VAGL, VSKI…ILFE, IAFM…PIIL, GGWL…TIWV, and IFPY…GIWF.

The protein belongs to the sodium:solute symporter (SSF) (TC 2.A.21) family.

It is found in the cell inner membrane. Its function is as follows. Transports acetate. The polypeptide is Cation/acetate symporter ActP (Salmonella newport (strain SL254)).